Reading from the N-terminus, the 339-residue chain is UDP-galactose transporter homolog 1 (339 aa).

The next 9 membrane-spanning stretches (helical) occupy residues 5 to 25 (ILKHVFAVGGIYCSFLTWGLL), 43 to 63 (VPYIVALVQATIAMICGLIYI), 91 to 111 (AISAPLAAYSLSYVDFLTYML), 138 to 158 (LVVLLVTVGITIFTLDGHKPS), 171 to 191 (SSLIGFVLLGSSLFLDGLTNA), 208 to 228 (HLMFALNFFLIVWNVIYMVLV), 246 to 268 (ISRYLLAYACCGAIGQCFIFYTL), 273 to 295 (SLVLVMVTVTRKMFSMILSIIVY), and 301 to 321 (LWQWVGIVIVFTGVVCESMGK).

The protein belongs to the nucleotide-sugar transporter family. SLC35B subfamily.

It is found in the endoplasmic reticulum membrane. In terms of biological role, may be involved in specific transport of UDP-Gal from the cytosol to the Golgi lumen. Involved in the maintenance of optimal conditions for the folding of secretory pathway proteins in the endoplasmic reticulum. The protein is UDP-galactose transporter homolog 1 (HUT1) of Kluyveromyces lactis (strain ATCC 8585 / CBS 2359 / DSM 70799 / NBRC 1267 / NRRL Y-1140 / WM37) (Yeast).